The sequence spans 257 residues: Cyclin-C1-1 (257 aa).

The protein belongs to the cyclin family. Cyclin C subfamily.

This chain is Cyclin-C1-1, found in Oryza sativa subsp. japonica (Rice).